The following is a 94-amino-acid chain: MICOS complex subunit MIC12 (94 aa).

The helical transmembrane segment at 7-23 (YGSFSVVASVLGASYYY) threads the bilayer.

Belongs to the MICOS complex subunit Mic12 family. Component of the mitochondrial contact site and cristae organizing system (MICOS) complex.

It is found in the mitochondrion inner membrane. In terms of biological role, component of the MICOS complex, a large protein complex of the mitochondrial inner membrane that plays crucial roles in the maintenance of crista junctions, inner membrane architecture, and formation of contact sites to the outer membrane. This chain is MICOS complex subunit MIC12 (AIM5), found in Eremothecium gossypii (strain ATCC 10895 / CBS 109.51 / FGSC 9923 / NRRL Y-1056) (Yeast).